Reading from the N-terminus, the 71-residue chain is Protein translocase subunit SecE (71 aa).

Residues 43–63 (VAGVGILAVGAIGFIIYVLLT) traverse the membrane as a helical segment.

This sequence belongs to the SecE/SEC61-gamma family. Component of the Sec protein translocase complex. Heterotrimer consisting of SecY (alpha), SecG (beta) and SecE (gamma) subunits. The heterotrimers can form oligomers, although 1 heterotrimer is thought to be able to translocate proteins. Interacts with the ribosome. May interact with SecDF, and other proteins may be involved.

It localises to the cell membrane. Its function is as follows. Essential subunit of the Sec protein translocation channel SecYEG. Clamps together the 2 halves of SecY. May contact the channel plug during translocation. The polypeptide is Protein translocase subunit SecE (Methanosarcina barkeri (strain Fusaro / DSM 804)).